Consider the following 311-residue polypeptide: Porphobilinogen deaminase (311 aa).

Residue cysteine 241 is modified to S-(dipyrrolylmethanemethyl)cysteine.

This sequence belongs to the HMBS family. In terms of assembly, monomer. Dipyrromethane is required as a cofactor.

The catalysed reaction is 4 porphobilinogen + H2O = hydroxymethylbilane + 4 NH4(+). It participates in porphyrin-containing compound metabolism; protoporphyrin-IX biosynthesis; coproporphyrinogen-III from 5-aminolevulinate: step 2/4. Functionally, tetrapolymerization of the monopyrrole PBG into the hydroxymethylbilane pre-uroporphyrinogen in several discrete steps. This Halalkalibacterium halodurans (strain ATCC BAA-125 / DSM 18197 / FERM 7344 / JCM 9153 / C-125) (Bacillus halodurans) protein is Porphobilinogen deaminase (hemC).